Consider the following 201-residue polypeptide: Small ribosomal subunit protein uS4 (201 aa).

The region spanning 93 to 156 (RRLDNMVYRL…KNLDIIKNAV (64 aa)) is the S4 RNA-binding domain.

The protein belongs to the universal ribosomal protein uS4 family. Part of the 30S ribosomal subunit. Contacts protein S5. The interaction surface between S4 and S5 is involved in control of translational fidelity.

In terms of biological role, one of the primary rRNA binding proteins, it binds directly to 16S rRNA where it nucleates assembly of the body of the 30S subunit. Its function is as follows. With S5 and S12 plays an important role in translational accuracy. The protein is Small ribosomal subunit protein uS4 of Limosilactobacillus reuteri subsp. reuteri (strain JCM 1112) (Lactobacillus reuteri).